Here is a 137-residue protein sequence, read N- to C-terminus: Large-conductance mechanosensitive channel (137 aa).

Transmembrane regions (helical) follow at residues 10–30 (FAMRGNVVDLAVGVIIGAAFG) and 76–96 (GVFIQNVFDFIIVAFAIFMAI).

This sequence belongs to the MscL family. Homopentamer.

Its subcellular location is the cell inner membrane. Functionally, channel that opens in response to stretch forces in the membrane lipid bilayer. May participate in the regulation of osmotic pressure changes within the cell. The sequence is that of Large-conductance mechanosensitive channel from Klebsiella pneumoniae subsp. pneumoniae (strain ATCC 700721 / MGH 78578).